A 416-amino-acid polypeptide reads, in one-letter code: Serine hydroxymethyltransferase (416 aa).

(6S)-5,6,7,8-tetrahydrofolate-binding positions include leucine 117 and glycine 121–leucine 123. Residue lysine 226 is modified to N6-(pyridoxal phosphate)lysine.

It belongs to the SHMT family. In terms of assembly, homodimer. Requires pyridoxal 5'-phosphate as cofactor.

Its subcellular location is the cytoplasm. It carries out the reaction (6R)-5,10-methylene-5,6,7,8-tetrahydrofolate + glycine + H2O = (6S)-5,6,7,8-tetrahydrofolate + L-serine. It functions in the pathway one-carbon metabolism; tetrahydrofolate interconversion. It participates in amino-acid biosynthesis; glycine biosynthesis; glycine from L-serine: step 1/1. Functionally, catalyzes the reversible interconversion of serine and glycine with tetrahydrofolate (THF) serving as the one-carbon carrier. This reaction serves as the major source of one-carbon groups required for the biosynthesis of purines, thymidylate, methionine, and other important biomolecules. Also exhibits THF-independent aldolase activity toward beta-hydroxyamino acids, producing glycine and aldehydes, via a retro-aldol mechanism. This chain is Serine hydroxymethyltransferase, found in Leptospira biflexa serovar Patoc (strain Patoc 1 / Ames).